We begin with the raw amino-acid sequence, 176 residues long: Probable inosine/xanthosine triphosphatase (176 aa).

Asp36 contributes to the Mg(2+) binding site.

This sequence belongs to the YjjX NTPase family. As to quaternary structure, homodimer. Mg(2+) is required as a cofactor. The cofactor is Mn(2+).

It catalyses the reaction XTP + H2O = XDP + phosphate + H(+). The enzyme catalyses ITP + H2O = IDP + phosphate + H(+). Functionally, phosphatase that hydrolyzes non-canonical purine nucleotides such as XTP and ITP to their respective diphosphate derivatives. Probably excludes non-canonical purines from DNA/RNA precursor pool, thus preventing their incorporation into DNA/RNA and avoiding chromosomal lesions. The sequence is that of Probable inosine/xanthosine triphosphatase from Saccharolobus islandicus (strain M.16.4 / Kamchatka #3) (Sulfolobus islandicus).